The sequence spans 457 residues: Secreted RxLR effector protein 8 (457 aa).

The N-terminal stretch at 1–19 (MRGTLATALLLVISSRVAT) is a signal peptide. Residues 48 to 69 (RFLRGSRKQRDDLAPTAADENR) carry the RxLR-dEER motif. Residue N68 is glycosylated (N-linked (GlcNAc...) asparagine). Disordered regions lie at residues 110–188 (RLSL…ALKS) and 398–457 (RQTI…RSSS). Low complexity predominate over residues 135–152 (SASTSTTSDIATSSSRTS). Composition is skewed to polar residues over residues 153-163 (NQRTPKTQASL) and 176-187 (SKNQFKKSTALK). The span at 442–457 (IKSKDHARKKRPRSSS) shows a compositional bias: basic residues.

This sequence belongs to the RxLR effector family.

Its subcellular location is the secreted. It localises to the host nucleus. Secreted effector that completely suppresses the host cell death induced by cell death-inducing proteins. The chain is Secreted RxLR effector protein 8 from Plasmopara viticola (Downy mildew of grapevine).